A 331-amino-acid chain; its full sequence is Zinc finger CW-type PWWP domain protein 2 homolog (331 aa).

The segment at 9–64 (EFVHRTWVQCENESCLKWRLLSPAAAAAVNPSEPWYCFMNTDPSYSSCSVSEEDFP) adopts a CW-type zinc-finger fold. Positions 18, 23, 45, and 56 each coordinate Zn(2+). One can recognise a PWWP domain in the interval 83–147 (LGSLVLVKLR…AAFVGHFSLT (65 aa)). The tract at residues 264 to 295 (IQEPTAREDESQGEQLSQCSPESPTGSPFQSY) is disordered. Residues 276 to 293 (GEQLSQCSPESPTGSPFQ) are compositionally biased toward polar residues.

Its function is as follows. Histone methylation reader which binds to non-methylated (H3K4me0), monomethylated (H3K4me1), dimethylated (H3K4me2) and trimethylated (H3K4me3) 'Lys-4' on histone H3. The order of binding preference is H3K4me3 &gt; H3K4me2 &gt; H3K4me1 &gt; H3K4me0. This is Zinc finger CW-type PWWP domain protein 2 homolog (Zcwpw2) from Mus musculus (Mouse).